Here is a 227-residue protein sequence, read N- to C-terminus: Enolase-phosphatase E1 (227 aa).

Residues D11 and E13 each coordinate Mg(2+). Substrate contacts are provided by residues 118-119 (SS) and K161. Mg(2+) is bound at residue D186.

Belongs to the HAD-like hydrolase superfamily. MasA/MtnC family. In terms of assembly, monomer. The cofactor is Mg(2+).

The protein localises to the cytoplasm. It is found in the nucleus. The catalysed reaction is 5-methylsulfanyl-2,3-dioxopentyl phosphate + H2O = 1,2-dihydroxy-5-(methylsulfanyl)pent-1-en-3-one + phosphate. The protein operates within amino-acid biosynthesis; L-methionine biosynthesis via salvage pathway; L-methionine from S-methyl-5-thio-alpha-D-ribose 1-phosphate: step 3/6. Its pathway is amino-acid biosynthesis; L-methionine biosynthesis via salvage pathway; L-methionine from S-methyl-5-thio-alpha-D-ribose 1-phosphate: step 4/6. Bifunctional enzyme that catalyzes the enolization of 2,3-diketo-5-methylthiopentyl-1-phosphate (DK-MTP-1-P) into the intermediate 2-hydroxy-3-keto-5-methylthiopentenyl-1-phosphate (HK-MTPenyl-1-P), which is then dephosphorylated to form the acireductone 1,2-dihydroxy-3-keto-5-methylthiopentene (DHK-MTPene). This is Enolase-phosphatase E1 from Saccharomyces cerevisiae (strain RM11-1a) (Baker's yeast).